Here is a 206-residue protein sequence, read N- to C-terminus: CMP-5'-(N-acetyl-N-hydroxy-3-aminopropyl)phosphonate hydrolase (206 aa).

The Nudix hydrolase domain occupies 37-166; it reads VRAPGAAIIV…RTVTSGTAIG (130 aa). Residues 74–95 carry the Nudix box motif; it reads GLVDDREDPAVTAAREAEEETG. The span at 177–194 shows a compositional bias: low complexity; the sequence is RQQPGGVQEQPGGAQQQG. Residues 177–206 form a disordered region; the sequence is RQQPGGVQEQPGGAQQQGMNESHSGRTVRG.

Belongs to the Nudix hydrolase family. Requires Mg(2+) as cofactor.

It catalyses the reaction CMP-5'-(N-acetyl-N-hydroxy-3-aminopropyl)phosphonate + H2O = 3-(N-acetyl-N-hydroxy)aminopropylphosphonate + CMP + H(+). Its pathway is antibiotic biosynthesis. Its function is as follows. Nucleotide hydrolase involved in the biosynthesis of the phosphonate antibiotic FR-900098, a potent antimalarial agent that acts as an inhibitor of 1-deoxy-D-xylulose 5-phosphate reductoisomerase (DXR), the first enzyme in the nonmevalonate pathway for isoprenoid biosynthesis. Catalyzes the hydrolysis of CMP-5'-(N-acetyl-N-hydroxy-3-aminopropyl)phosphonate (CMP-5'-FR-900098) to produce CMP and the final compound FR-900098. In vitro, has broad substrate specificity and also catalyzes the hydrolysis of all the other CMP-containing intermediates within the pathway and shows low activity toward CTP. This is CMP-5'-(N-acetyl-N-hydroxy-3-aminopropyl)phosphonate hydrolase from Streptomyces rubellomurinus (strain ATCC 31215).